The following is a 663-amino-acid chain: Polyunsaturated fatty acid lipoxygenase ALOX15 (663 aa).

The 114-residue stretch at G2 to R115 folds into the PLAT domain. The Lipoxygenase domain maps to T116–I663. Fe cation contacts are provided by H361, H366, H541, H545, and I663.

This sequence belongs to the lipoxygenase family. Interacts with PEBP1; in response to IL13/interleukin-13, prevents the interaction of PEBP1 with RAF1 to activate the ERK signaling cascade. Fe cation serves as cofactor. In terms of tissue distribution, detected in tracheal epithelium.

It is found in the cytoplasm. The protein localises to the cytosol. The protein resides in the cell membrane. It localises to the lipid droplet. The catalysed reaction is (5Z,8Z,11Z,14Z)-eicosatetraenoate + O2 = (12S)-hydroperoxy-(5Z,8Z,10E,14Z)-eicosatetraenoate. It carries out the reaction (5Z,8Z,11Z,14Z)-eicosatetraenoate + O2 = (15S)-hydroperoxy-(5Z,8Z,11Z,13E)-eicosatetraenoate. The enzyme catalyses (9Z,12Z)-octadecadienoate + O2 = (13S)-hydroperoxy-(9Z,11E)-octadecadienoate. It catalyses the reaction (5Z,8Z,11Z,14Z)-eicosatetraenoate + 2 O2 = (14R,15S)-dihydroperoxy-(5Z,8Z,10E,12E)-eicosatetraenoate. The catalysed reaction is (5Z,8Z,11Z,14Z)-eicosatetraenoate + 2 O2 = (8S,15S)-dihydroperoxy-(5Z,9E,11Z,13E)-eicosatetraenoate. It carries out the reaction (14S,15R)-epoxy-(5Z,8Z,11Z)-eicosatrienoate + O2 = (8S)-hydroperoxy-(14S,15R)-epoxy-(5Z,9E,11Z)-eicosatrienoate. The enzyme catalyses (14S,15R)-epoxy-(5Z,8Z,11Z)-eicosatrienoate + O2 = (12S)-hydroperoxy-(14S,15R)-epoxy-(5Z,8Z,10E)-eicosatrienoate. It catalyses the reaction (14R,15S)-epoxy-(5Z,8Z,11Z)-eicosatrienoate + O2 = (5S)-hydroperoxy-(14R,15S)-epoxy-(6E,8Z,11Z)-eicosatrienoate. The catalysed reaction is (14R,15S)-epoxy-(5Z,8Z,11Z)-eicosatrienoate + O2 = (12S)-hydroperoxy-(14R,15S)-epoxy-(5Z,8Z,10E)-eicosatrienoate. It carries out the reaction (15R)-hydroperoxy-(5Z,8Z,11Z,13E)-eicosatetraenoate = 15-oxo-(5Z,8Z,11Z,13E)-eicosatetraenoate + H2O. The enzyme catalyses (15S)-hydroperoxy-(5Z,8Z,11Z,13E)-eicosatetraenoate = (14S,15S)-epoxy-(5Z,8Z,10E,12E)-eicosatetraenoate + H2O. It catalyses the reaction (12S)-hydroperoxy-(5Z,8Z,10E,14Z)-eicosatetraenoate = (8S)-hydroxy-(11S,12S)-epoxy-(5Z,9E,14Z)-eicosatrienoate. The catalysed reaction is (4Z,7Z,10Z,13Z,16Z)-docosapentaenoate + O2 = 14-hydroperoxy-(4Z,7Z,10Z,12E,16Z)-docosapentaenoate. It carries out the reaction (7Z,10Z,13Z,16Z,19Z)-docosapentaenoate + O2 = 14-hydroperoxy-(7Z,10Z,12E,16Z,19Z)-docosapentaenoate. The enzyme catalyses (4Z,7Z,10Z,13Z,16Z,19Z)-docosahexaenoate + O2 = (14S)-hydroperoxy-(4Z,7Z,10Z,12E,16Z,19Z)-docosahexaenoate. It catalyses the reaction (4Z,7Z,10Z,13Z,16Z,19Z)-docosahexaenoate + O2 = (17S)-hydroperoxy-(4Z,7Z,10Z,13Z,15E,19Z)-docosahexaenoate. The catalysed reaction is (7S)-hydroperoxy-(4Z,8E,10Z,13Z,16Z,19Z)-docosahexaenoate + O2 = (7S,14S)-dihydroperoxy-(4Z,8E,10Z,12E,16Z,19Z)-docosahexaenoate. It carries out the reaction (7S)-hydroperoxy-(4Z,8E,10Z,13Z,16Z,19Z)-docosahexaenoate + O2 = (7S,17S)-dihydroperoxy-(4Z,8E,10Z,13Z,15E,19Z)-docosahexaenoate. The enzyme catalyses (4Z,7Z,10Z,13Z,16Z,19Z)-docosahexaenoate + O2 = (11S)-hydroperoxy-(4Z,7Z,9E,13Z,16Z,19Z)-docosahexaenoate. It catalyses the reaction N-(5Z,8Z,11Z,14Z)-eicosatetraenoyl-taurine + O2 = N-(12S)-hydroperoxy-(5Z,8Z,10E,14Z)-eicosatetraenoyl-taurine. The catalysed reaction is N-(5Z,8Z,11Z,14Z)-eicosatetraenoyl-gamma-aminobutanoate + O2 = N-(12S)-hydroperoxy-(5Z,8Z,10E,14Z)-eicosatetraenoyl-gamma-aminobutanoate. It carries out the reaction N-(5Z,8Z,11Z,14Z)-eicosatetraenoyl-glycine + O2 = N-(12S)-hydroperoxy-(5Z,8Z,10E,14Z)-eicosatetraenoyl-glycine. The enzyme catalyses N-(5Z,8Z,11Z,14Z)-eicosatetraenoyl-L-alanine + O2 = N-(12S)-hydroperoxy-(5Z,8Z,10E,14Z)-eicosatetraenoyl-alanine. It catalyses the reaction N-(5Z,8Z,11Z,14Z)-eicosatetraenoyl-taurine + O2 = N-(15S)-hydroperoxy-(5Z,8Z,11Z,13E)-eicosatetraenoyl-taurine. The catalysed reaction is N-(5Z,8Z,11Z,14Z)-eicosatetraenoyl-gamma-aminobutanoate + O2 = N-(15S)-hydroperoxy-(5Z,8Z,11Z,13E)-eicosatetraenoyl-gamma-aminobutanoate. It carries out the reaction N-(5Z,8Z,11Z,14Z)-eicosatetraenoyl-glycine + O2 = N-(15S)-hydroperoxy-(5Z,8Z,11Z,13E)-eicosatetraenoyl-glycine. The enzyme catalyses N-(5Z,8Z,11Z,14Z)-eicosatetraenoyl-L-alanine + O2 = N-(15S)-hydroperoxy-(5Z,8Z,11Z,13E)-eicosatetraenoyl-alanine. It functions in the pathway lipid metabolism; hydroperoxy eicosatetraenoic acid biosynthesis. Non-heme iron-containing dioxygenase that catalyzes the stereo-specific peroxidation of free and esterified polyunsaturated fatty acids generating a spectrum of bioactive lipid mediators. It inserts peroxyl groups at C12 or C15 of arachidonate ((5Z,8Z,11Z,14Z)-eicosatetraenoate) producing both 12-hydroperoxyeicosatetraenoate/12-HPETE and 15-hydroperoxyeicosatetraenoate/15-HPETE. It may then act on 12-HPETE to produce hepoxilins, which may show pro-inflammatory properties. Can also peroxidize linoleate ((9Z,12Z)-octadecadienoate) to 13-hydroperoxyoctadecadienoate. May participate in the sequential oxidations of DHA ((4Z,7Z,10Z,13Z,16Z,19Z)-docosahexaenoate) to generate specialized pro-resolving mediators (SPMs)like resolvin D5 ((7S,17S)-diHPDHA) and (7S,14S)-diHPDHA, that actively down-regulate the immune response and have anti-aggregation properties with platelets. Can convert epoxy fatty acids to hydroperoxy-epoxides derivatives followed by an intramolecular nucleophilic substitution leading to the formation of monocyclic endoperoxides. Plays an important role during the maintenance of self-tolerance by peroxidizing membrane-bound phosphatidylethanolamine which can then signal the sorting process for clearance of apoptotic cells during inflammation and prevent an autoimmune response. In addition to its role in the immune and inflammatory responses, this enzyme may play a role in epithelial wound healing in the cornea through production of lipoxin A4 (LXA(4)) and docosahexaenoic acid-derived neuroprotectin D1 (NPD1; 10R,17S-HDHA), both lipid autacoids exhibit anti-inflammatory and neuroprotective properties. Furthermore, it may regulate actin polymerization which is crucial for several biological processes such as the phagocytosis of apoptotic cells. It is also implicated in the generation of endogenous ligands for peroxisome proliferator activated receptor (PPAR-gamma), hence modulating macrophage development and function. It may also exert a negative effect on skeletal development by regulating bone mass through this pathway. As well as participates in ER stress and downstream inflammation in adipocytes, pancreatic islets, and liver. Finally, it is also involved in the cellular response to IL13/interleukin-13. The chain is Polyunsaturated fatty acid lipoxygenase ALOX15 from Bos taurus (Bovine).